The primary structure comprises 480 residues: RuvB-like helicase 2 (480 aa).

76-83 (GPPSTGKT) lines the ATP pocket.

It belongs to the RuvB family. May form heterododecamers with RVB1. Component of the SWR1 chromatin remodeling complex, the INO80 chromatin remodeling complex, and of the R2TP complex.

It is found in the nucleus. It catalyses the reaction ATP + H2O = ADP + phosphate + H(+). In terms of biological role, DNA helicase which participates in several chromatin remodeling complexes, including the SWR1 and the INO80 complexes. The SWR1 complex mediates the ATP-dependent exchange of histone H2A for the H2A variant HZT1 leading to transcriptional regulation of selected genes by chromatin remodeling. The INO80 complex remodels chromatin by shifting nucleosomes and is involved in DNA repair. Also involved in pre-rRNA processing. In Debaryomyces hansenii (strain ATCC 36239 / CBS 767 / BCRC 21394 / JCM 1990 / NBRC 0083 / IGC 2968) (Yeast), this protein is RuvB-like helicase 2 (RVB2).